Here is a 286-residue protein sequence, read N- to C-terminus: ATP phosphoribosyltransferase (286 aa).

It belongs to the ATP phosphoribosyltransferase family. Long subfamily. The cofactor is Mg(2+).

The protein resides in the cytoplasm. The enzyme catalyses 1-(5-phospho-beta-D-ribosyl)-ATP + diphosphate = 5-phospho-alpha-D-ribose 1-diphosphate + ATP. It participates in amino-acid biosynthesis; L-histidine biosynthesis; L-histidine from 5-phospho-alpha-D-ribose 1-diphosphate: step 1/9. Feedback inhibited by histidine. Its function is as follows. Catalyzes the condensation of ATP and 5-phosphoribose 1-diphosphate to form N'-(5'-phosphoribosyl)-ATP (PR-ATP). Has a crucial role in the pathway because the rate of histidine biosynthesis seems to be controlled primarily by regulation of HisG enzymatic activity. This chain is ATP phosphoribosyltransferase, found in Cytophaga hutchinsonii (strain ATCC 33406 / DSM 1761 / CIP 103989 / NBRC 15051 / NCIMB 9469 / D465).